Reading from the N-terminus, the 1385-residue chain is Coiled-coil domain-containing protein 7 (1385 aa).

The stretch at 299–330 forms a coiled coil; it reads LDAEYKQMQCDFQLLSEEKLVLENELQKLKDK. A disordered region spans residues 329–364; that stretch reads DKEKTKPTNNRTKKAVKTVKKKDKGKSEDSEKKMSP. Residues 339 to 352 show a composition bias toward basic residues; sequence RTKKAVKTVKKKDK. Over residues 353–364 the composition is skewed to basic and acidic residues; it reads GKSEDSEKKMSP. Residues 374–411 are a coiled coil; the sequence is LDQVQKVARLEIENKVLQEQLKQALQEAEKAKHQLNYF. Disordered regions lie at residues 422 to 545, 572 to 752, and 809 to 834; these read GKTE…SKEV, TESK…EPNE, and TKKL…LKHQ. The segment covering 425-436 has biased composition (polar residues); sequence ETTMQVGNSQTK. Composition is skewed to basic and acidic residues over residues 437 to 455 and 481 to 490; these read VKGE…RKSL and LIEKSSEKKR. 3 stretches are compositionally biased toward polar residues: residues 493 to 503, 511 to 528, and 536 to 545; these read PAISDLSQILK, LESS…YKSP, and LTTVSSSKEV. Basic and acidic residues predominate over residues 573 to 589; it reads ESKKADVSEEQLQKMTE. Polar residues predominate over residues 654 to 664; sequence RIQSETKNLKA. 2 stretches are compositionally biased toward basic and acidic residues: residues 665–676 and 685–697; these read TRNESFHSHNDV and QDTK…EVKK. A compositionally biased stretch (polar residues) spans 701–711; the sequence is FQDNQLSTHNE. The span at 712 to 726 shows a compositional bias: basic and acidic residues; the sequence is VPNERLVVEHQESLS.

In terms of tissue distribution, expressed in epithelium of normal cervix and cervical cancer. Overexpressed in early and interim cervical cancer.

Its function is as follows. May play a role in tumorigenesis. The protein is Coiled-coil domain-containing protein 7 (CCDC7) of Homo sapiens (Human).